The chain runs to 62 residues: Conotoxin Pn-B02 (62 aa).

An N-terminal signal peptide occupies residues 1 to 19 (MRCLPVFIILLLLIASAPS). The propeptide occupies 20–49 (FDALPKTEDNVPLSSFHDNLKRTRRIHLNI). Ala-61 carries the alanine amide modification.

This sequence belongs to the conotoxin T superfamily. In terms of processing, contains 2 disulfide bonds that can be either 'C1-C3, C2-C4' or 'C1-C4, C2-C3', since these disulfide connectivities have been observed for conotoxins with cysteine framework V (for examples, see AC P0DQQ7 and AC P81755). Expressed by the venom duct.

It localises to the secreted. This chain is Conotoxin Pn-B02, found in Conus pennaceus (Feathered cone).